Here is a 538-residue protein sequence, read N- to C-terminus: uncharacterized protein (538 aa).

An N-terminal signal peptide occupies residues 1–17; the sequence is MSFSATILFSPPSGSEA. The disordered stretch occupies residues 101-131; sequence RQGKVSIPDEDGESRAHSSPPEEPGPLKESP. Residues Lys128 and Lys221 each participate in a glycyl lysine isopeptide (Lys-Gly) (interchain with G-Cter in SUMO2) cross-link. At Ser224 the chain carries Phosphoserine. The interval 233–253 is disordered; that stretch reads RATPETGPENGTKLPPPRPED. A phosphoserine mark is found at Ser285 and Ser428. The segment at 488-523 is disordered; sequence LPPELYNPNFQEEEDEGGDENAPGSPSFDQPHKTCC.

The protein localises to the secreted. This is an uncharacterized protein from Homo sapiens (Human).